The chain runs to 138 residues: uncharacterized protein (138 aa).

2 helical membrane passes run 21-43 (TAFI…AGGA) and 48-65 (SLIA…YAII).

It localises to the cell membrane. This is an uncharacterized protein from Archaeoglobus fulgidus (strain ATCC 49558 / DSM 4304 / JCM 9628 / NBRC 100126 / VC-16).